The sequence spans 368 residues: Protein-glutamate methylesterase/protein-glutamine glutaminase (368 aa).

A Response regulatory domain is found at 9–126 (KVLVVDDSAF…SINMKELKDE (118 aa)). A 4-aspartylphosphate modification is found at aspartate 60. Residues 161–354 (SVPARIAVAI…ETVVKAVEII (194 aa)) enclose the CheB-type methylesterase domain. Active-site residues include serine 173, histidine 200, and aspartate 296.

It belongs to the CheB family. Phosphorylated by CheA. Phosphorylation of the N-terminal regulatory domain activates the methylesterase activity.

Its subcellular location is the cytoplasm. It carries out the reaction [protein]-L-glutamate 5-O-methyl ester + H2O = L-glutamyl-[protein] + methanol + H(+). It catalyses the reaction L-glutaminyl-[protein] + H2O = L-glutamyl-[protein] + NH4(+). Involved in chemotaxis. Part of a chemotaxis signal transduction system that modulates chemotaxis in response to various stimuli. Catalyzes the demethylation of specific methylglutamate residues introduced into the chemoreceptors (methyl-accepting chemotaxis proteins or MCP) by CheR. Also mediates the irreversible deamidation of specific glutamine residues to glutamic acid. The protein is Protein-glutamate methylesterase/protein-glutamine glutaminase of Pyrococcus horikoshii (strain ATCC 700860 / DSM 12428 / JCM 9974 / NBRC 100139 / OT-3).